The chain runs to 281 residues: MSHADLARTIEAAWEDRADVTAATQGPVREAVEAALALLDSGQVRVAEKSGNADWQVNQWLKKAVLLSFRLTDMELISGAPGGAAWWDKVPSKFDGWDAERFRQAGFRAVPGAIVRRSAFIAPGAVLMPSFVNLGAHVGEGTMVDTWATVGSCAQIGKNCHISGGAGIGGVLEPLQANPVIIEDNCFIGARAEVAEGVIVGEGSVLSMGVYLGASTKIVDRATGEVVYGRVPPYSVVVSGSLPGKALPDGAPGPALYCAVIVKRVDAGTRAKTGINELLRD.

Belongs to the transferase hexapeptide repeat family.

It is found in the cytoplasm. The enzyme catalyses (S)-2,3,4,5-tetrahydrodipicolinate + succinyl-CoA + H2O = (S)-2-succinylamino-6-oxoheptanedioate + CoA. It participates in amino-acid biosynthesis; L-lysine biosynthesis via DAP pathway; LL-2,6-diaminopimelate from (S)-tetrahydrodipicolinate (succinylase route): step 1/3. The polypeptide is 2,3,4,5-tetrahydropyridine-2,6-dicarboxylate N-succinyltransferase (Methylobacterium sp. (strain 4-46)).